The sequence spans 640 residues: Probable Ufm1-specific protease (640 aa).

Residues Cys-467, Asp-591, and His-593 contribute to the active site.

It belongs to the peptidase C78 family.

Thiol protease which recognizes and hydrolyzes the peptide bond at the C-terminal Gly of ufm-1, a ubiquitin-like modifier protein bound to a number of target proteins. This is Probable Ufm1-specific protease from Oryza sativa subsp. japonica (Rice).